Reading from the N-terminus, the 177-residue chain is MPIKSRIRAIPDYPKKGIMFRDITTLIKDPVGFRLVIDGLTQRYLENGVDFDVVVGVEARGFILGSALAYTLGKGFVPVRKPGKLPADVVSQEYELEYGTDKVEIHLDAILPGTRVLLVDDLLATGGTALAAAALVEKVGGVVAEMAFIVNLPDIGGERKILDKGYRVFSLTEFEGE.

It belongs to the purine/pyrimidine phosphoribosyltransferase family. As to quaternary structure, homodimer.

The protein resides in the cytoplasm. The enzyme catalyses AMP + diphosphate = 5-phospho-alpha-D-ribose 1-diphosphate + adenine. The protein operates within purine metabolism; AMP biosynthesis via salvage pathway; AMP from adenine: step 1/1. Functionally, catalyzes a salvage reaction resulting in the formation of AMP, that is energically less costly than de novo synthesis. The sequence is that of Adenine phosphoribosyltransferase from Chlorobium phaeovibrioides (strain DSM 265 / 1930) (Prosthecochloris vibrioformis (strain DSM 265)).